Reading from the N-terminus, the 372-residue chain is NAD(P)H-quinone oxidoreductase subunit 1 (372 aa).

8 consecutive transmembrane segments (helical) span residues 27-47 (IIWL…GVLV), 97-117 (ILFT…WLIV), 128-148 (VGIG…GLLM), 176-196 (LALS…IDIV), 204-224 (ILSW…ICAL), 266-286 (ILSA…PIPV), 308-328 (SIGI…AILL), and 347-367 (FLLP…LAFP).

This sequence belongs to the complex I subunit 1 family. In terms of assembly, NDH-1 is composed of at least 11 different subunits.

Its subcellular location is the cellular thylakoid membrane. The enzyme catalyses a plastoquinone + NADH + (n+1) H(+)(in) = a plastoquinol + NAD(+) + n H(+)(out). It catalyses the reaction a plastoquinone + NADPH + (n+1) H(+)(in) = a plastoquinol + NADP(+) + n H(+)(out). NDH-1 shuttles electrons from an unknown electron donor, via FMN and iron-sulfur (Fe-S) centers, to quinones in the respiratory and/or the photosynthetic chain. The immediate electron acceptor for the enzyme in this species is believed to be plastoquinone. Couples the redox reaction to proton translocation, and thus conserves the redox energy in a proton gradient. The chain is NAD(P)H-quinone oxidoreductase subunit 1 from Prochlorococcus marinus (strain MIT 9301).